The primary structure comprises 369 residues: Cyclin-I2 (369 aa).

The disordered stretch occupies residues 1–116; it reads MASGAQLPPQ…SRKPRNLEGD (116 aa). 2 stretches are compositionally biased toward low complexity: residues 64–76 and 83–101; these read AASL…AVPV and APAG…EQAP.

It belongs to the cyclin family.

This chain is Cyclin-I2 (CCNI2), found in Homo sapiens (Human).